We begin with the raw amino-acid sequence, 257 residues long: Isoprenyl transferase (257 aa).

Residue D33 is part of the active site. Residue D33 participates in Mg(2+) binding. Residues 34–37 (GNGR), W38, R46, H50, and 78–80 (STE) contribute to the substrate site. The active-site Proton acceptor is N81. Substrate contacts are provided by residues W82, R84, R204, and 210 to 212 (RLS). A Mg(2+)-binding site is contributed by E223.

It belongs to the UPP synthase family. As to quaternary structure, homodimer. Mg(2+) serves as cofactor.

Its function is as follows. Catalyzes the condensation of isopentenyl diphosphate (IPP) with allylic pyrophosphates generating different type of terpenoids. In Clostridium acetobutylicum (strain ATCC 824 / DSM 792 / JCM 1419 / IAM 19013 / LMG 5710 / NBRC 13948 / NRRL B-527 / VKM B-1787 / 2291 / W), this protein is Isoprenyl transferase.